The following is a 299-amino-acid chain: Pyridoxal 5'-phosphate synthase subunit PdxS (299 aa).

Position 24 (aspartate 24) interacts with D-ribose 5-phosphate. Lysine 81 serves as the catalytic Schiff-base intermediate with D-ribose 5-phosphate. Glycine 153 lines the D-ribose 5-phosphate pocket. Arginine 165 contacts D-glyceraldehyde 3-phosphate. D-ribose 5-phosphate contacts are provided by residues glycine 219 and 240–241; that span reads GS.

This sequence belongs to the PdxS/SNZ family. As to quaternary structure, in the presence of PdxT, forms a dodecamer of heterodimers.

It catalyses the reaction aldehydo-D-ribose 5-phosphate + D-glyceraldehyde 3-phosphate + L-glutamine = pyridoxal 5'-phosphate + L-glutamate + phosphate + 3 H2O + H(+). The protein operates within cofactor biosynthesis; pyridoxal 5'-phosphate biosynthesis. Catalyzes the formation of pyridoxal 5'-phosphate from ribose 5-phosphate (RBP), glyceraldehyde 3-phosphate (G3P) and ammonia. The ammonia is provided by the PdxT subunit. Can also use ribulose 5-phosphate and dihydroxyacetone phosphate as substrates, resulting from enzyme-catalyzed isomerization of RBP and G3P, respectively. This Methanococcus maripaludis (strain DSM 14266 / JCM 13030 / NBRC 101832 / S2 / LL) protein is Pyridoxal 5'-phosphate synthase subunit PdxS.